The chain runs to 837 residues: MANILKTIIENDKGEIRRLEKMADKVFKYEDQMAALTDDQLKAKTVEFKERYQNGESLDSLLYEAFAVVREGAKRVLGLFPYKVQVMGGIVLHHGDVPEMRTGEGKTLTATMPVYLNALSGKGVHVVTVNEYLSERDATEMGELYSWLGLSVGINLATKSPMEKKEAYECDITYSTNSEIGFDYLRDNMVVRAENMVQRPLNYALVDEVDSILIDEARTPLIVSGANAVETSQLYHMADHYVKSLNKDDYIIDVQSKTIGLSDSGIDRAESYFKLENLYDIENVALTHFIDNALRANYIMLLDIDYVVSEEQEILIVDQFTGRTMEGRRYSDGLHQAIEAKEGVPIQDETKTSASITYQNLFRMYKKLSGMTGTGKTEEEEFREIYNIRVIPIPTNRPVQRIDHSDLLYASIESKFKAVVEDVKARYQKGQPVLVGTVAVETSDYISKKLVAAGVPHEVLNAKNHYREAQIIMNAGQRGAVTIATNMAGRGTDIKLGEGVRELGGLCVIGTERHESRRIDNQLRGRSGRQGDPGESQFYLSLEDDLMKRFGSERLKGIFERLNMSEEAIESRMLTRQVEAAQKRVEGNNYDTRKQVLQYDDVMREQREIIYAQRYDVITADRDLAPEIQSMIKRTIERVVDGHARAKQDEKLEAILNFAKYNLLPEDSITMEDLSGLSDKAIKEELFQRALKVYDSQVSKLRDEEAVKEFQKVLILRVVDNKWTDHIDALDQLRNAVGLRGYAQNNPVVEYQAEGFRMFNDMIGSIEFDVTRLMMKAQIHEQERPQAERHISTTATRNIAAHQASMPEDLDLSQIGRNELCPCGSGKKFKNCHGKRK.

Residues Gln-85, 103-107 (GEGKT), and Asp-493 contribute to the ATP site. Residues Cys-821, Cys-823, Cys-832, and His-833 each contribute to the Zn(2+) site.

It belongs to the SecA family. In terms of assembly, monomer and homodimer. Part of the essential Sec protein translocation apparatus which comprises SecA, SecYEG and auxiliary proteins SecDF. Other proteins may also be involved. Zn(2+) is required as a cofactor.

Its subcellular location is the cell membrane. It localises to the cytoplasm. It carries out the reaction ATP + H2O + cellular proteinSide 1 = ADP + phosphate + cellular proteinSide 2.. In terms of biological role, part of the Sec protein translocase complex. Interacts with the SecYEG preprotein conducting channel. Has a central role in coupling the hydrolysis of ATP to the transfer of proteins into and across the cell membrane, serving as an ATP-driven molecular motor driving the stepwise translocation of polypeptide chains across the membrane. The sequence is that of Protein translocase subunit SecA from Streptococcus pneumoniae (strain Taiwan19F-14).